We begin with the raw amino-acid sequence, 43 residues long: Metallothionein-3 (43 aa).

The protein belongs to the metallothionein superfamily. Type 5 family.

Its function is as follows. This protein binds cations of several transition elements. Thought to be involved in metal ion homeostasis. The sequence is that of Metallothionein-3 (MtnC) from Drosophila melanogaster (Fruit fly).